Here is a 235-residue protein sequence, read N- to C-terminus: Phosphoribosylaminoimidazole-succinocarboxamide synthase (235 aa).

This sequence belongs to the SAICAR synthetase family.

It catalyses the reaction 5-amino-1-(5-phospho-D-ribosyl)imidazole-4-carboxylate + L-aspartate + ATP = (2S)-2-[5-amino-1-(5-phospho-beta-D-ribosyl)imidazole-4-carboxamido]succinate + ADP + phosphate + 2 H(+). The protein operates within purine metabolism; IMP biosynthesis via de novo pathway; 5-amino-1-(5-phospho-D-ribosyl)imidazole-4-carboxamide from 5-amino-1-(5-phospho-D-ribosyl)imidazole-4-carboxylate: step 1/2. The sequence is that of Phosphoribosylaminoimidazole-succinocarboxamide synthase from Streptococcus pneumoniae (strain 70585).